A 446-amino-acid polypeptide reads, in one-letter code: Deoxyguanosinetriphosphate triphosphohydrolase-like protein (446 aa).

Residues 1-28 (MSSSVWQERRHGEDKQRRNDHRSPFQRD) are disordered. Over residues 7-28 (QERRHGEDKQRRNDHRSPFQRD) the composition is skewed to basic and acidic residues. Positions 59–252 (RLTHSLEVSQ…MELADDIAYA (194 aa)) constitute an HD domain.

The protein belongs to the dGTPase family. Type 2 subfamily.

The chain is Deoxyguanosinetriphosphate triphosphohydrolase-like protein from Shewanella sp. (strain MR-4).